A 420-amino-acid chain; its full sequence is D-tagatose-1,6-bisphosphate aldolase subunit GatZ (420 aa).

Belongs to the GatZ/KbaZ family. GatZ subfamily. Forms a complex with GatY.

Its pathway is carbohydrate metabolism; D-tagatose 6-phosphate degradation; D-glyceraldehyde 3-phosphate and glycerone phosphate from D-tagatose 6-phosphate: step 2/2. Its function is as follows. Component of the tagatose-1,6-bisphosphate aldolase GatYZ that is required for full activity and stability of the Y subunit. Could have a chaperone-like function for the proper and stable folding of GatY. When expressed alone, GatZ does not show any aldolase activity. Is involved in the catabolism of galactitol. The protein is D-tagatose-1,6-bisphosphate aldolase subunit GatZ of Escherichia coli (strain SMS-3-5 / SECEC).